We begin with the raw amino-acid sequence, 250 residues long: Vitamin B12 import ATP-binding protein BtuD (250 aa).

Residues 3-233 (LRQASVLPRL…EVLSPVFGVA (231 aa)) enclose the ABC transporter domain. 29–36 (GPNGAGKS) lines the ATP pocket.

Belongs to the ABC transporter superfamily. Vitamin B12 importer (TC 3.A.1.13.1) family. As to quaternary structure, the complex is composed of two ATP-binding proteins (BtuD), two transmembrane proteins (BtuC) and a solute-binding protein (BtuF).

The protein resides in the cell inner membrane. It carries out the reaction an R-cob(III)alamin(out) + ATP + H2O = an R-cob(III)alamin(in) + ADP + phosphate + H(+). Part of the ABC transporter complex BtuCDF involved in vitamin B12 import. Responsible for energy coupling to the transport system. This is Vitamin B12 import ATP-binding protein BtuD from Pectobacterium atrosepticum (strain SCRI 1043 / ATCC BAA-672) (Erwinia carotovora subsp. atroseptica).